A 177-amino-acid chain; its full sequence is Adenine phosphoribosyltransferase (177 aa).

The protein belongs to the purine/pyrimidine phosphoribosyltransferase family. As to quaternary structure, homodimer.

It localises to the cytoplasm. The catalysed reaction is AMP + diphosphate = 5-phospho-alpha-D-ribose 1-diphosphate + adenine. Its pathway is purine metabolism; AMP biosynthesis via salvage pathway; AMP from adenine: step 1/1. In terms of biological role, catalyzes a salvage reaction resulting in the formation of AMP, that is energically less costly than de novo synthesis. The polypeptide is Adenine phosphoribosyltransferase (Pelodictyon phaeoclathratiforme (strain DSM 5477 / BU-1)).